A 334-amino-acid polypeptide reads, in one-letter code: Transcription factor MYB92 (334 aa).

HTH myb-type domains are found at residues 9-61 and 62-116; these read DSGL…TNYL and RPDI…KKKL. 2 DNA-binding regions (H-T-H motif) span residues 37–61 and 89–112; these read WRALPKLAGLNRCGKSCRLRWTNYL and WSTIANQLPGRTDNEIKNFWNTHL.

In terms of assembly, interacts with FBX5. As to expression, highly expressed in roots and at lower levels in stems, flowers and siliques.

It is found in the nucleus. Probable transcription factor. This Arabidopsis thaliana (Mouse-ear cress) protein is Transcription factor MYB92.